A 365-amino-acid chain; its full sequence is Probable 7-methylxanthine methyltransferase PCS2 (365 aa).

Y19 lines the S-adenosyl-L-homocysteine pocket. T26 serves as a coordination point for theobromine. C62, D99, L100, S134, and F135 together coordinate S-adenosyl-L-homocysteine. Y152, H155, and W156 together coordinate theobromine. N173 contributes to the Mg(2+) binding site. R221 is a binding site for theobromine. 3 residues coordinate Mg(2+): D259, F261, and N262.

It belongs to the methyltransferase superfamily. Type-7 methyltransferase family. Requires Mg(2+) as cofactor.

It catalyses the reaction 7-methylxanthine + S-adenosyl-L-methionine = theobromine + S-adenosyl-L-homocysteine + H(+). No detectable N-methyltransferase activity. This Camellia ptilophylla (Cocoa tea) protein is Probable 7-methylxanthine methyltransferase PCS2.